Consider the following 385-residue polypeptide: MDSFLQVQKSTIALLGFDLFSENREMWKRPYRAMNVFSIAAIFPFILAAVLHNWKNVLLLADAMVALLITILGLFKFSMILYLRRDFKRLIDKFRLLMSNEAEQGEEYAEILNAANKQDQRMCTLFRTCFLLAWALNSVLPLVRMGLSYWLAGHAEPELPFPCLFPWNIHIIRNYVLSFIWSAFASTGVVLPAVSLDTIFCSFTSNLCAFFKIAQYKVVRFKGGSLKESQATLNKVFALYQTSLDMCNDLNQCYQPIICAQFFISSLQLCMLGYLFSITFAQTEGVYYASFIATIIIQAYIYCYCGENLKTESASFEWAIYDSPWHESLGAGGASTSICRSLLISMMRAHRGFRITGYFFEANMEAFSSIVRTAMSYITMLRSFS.

The Cytoplasmic portion of the chain corresponds to 1–33; that stretch reads MDSFLQVQKSTIALLGFDLFSENREMWKRPYRA. A helical membrane pass occupies residues 34–54; sequence MNVFSIAAIFPFILAAVLHNW. The Extracellular segment spans residues 55 to 62; it reads KNVLLLAD. Residues 63-83 form a helical membrane-spanning segment; that stretch reads AMVALLITILGLFKFSMILYL. Residues 84 to 129 lie on the Cytoplasmic side of the membrane; that stretch reads RRDFKRLIDKFRLLMSNEAEQGEEYAEILNAANKQDQRMCTLFRTC. Residues 130 to 150 traverse the membrane as a helical segment; the sequence is FLLAWALNSVLPLVRMGLSYW. Over 151–175 the chain is Extracellular; it reads LAGHAEPELPFPCLFPWNIHIIRNY. The chain crosses the membrane as a helical span at residues 176 to 196; sequence VLSFIWSAFASTGVVLPAVSL. The Cytoplasmic portion of the chain corresponds to 197-255; that stretch reads DTIFCSFTSNLCAFFKIAQYKVVRFKGGSLKESQATLNKVFALYQTSLDMCNDLNQCYQ. A helical transmembrane segment spans residues 256–276; it reads PIICAQFFISSLQLCMLGYLF. The Extracellular segment spans residues 277–284; sequence SITFAQTE. A helical membrane pass occupies residues 285–305; the sequence is GVYYASFIATIIIQAYIYCYC. Residues 306 to 357 are Cytoplasmic-facing; sequence GENLKTESASFEWAIYDSPWHESLGAGGASTSICRSLLISMMRAHRGFRITG. A helical membrane pass occupies residues 358 to 378; sequence YFFEANMEAFSSIVRTAMSYI. Residues 379–385 are Extracellular-facing; sequence TMLRSFS.

This sequence belongs to the insect chemoreceptor superfamily. Heteromeric odorant receptor channel (TC 1.A.69) family. Or1a subfamily. Interacts with Orco. Complexes exist early in the endomembrane system in olfactory sensory neurons (OSNs), coupling these complexes to the conserved ciliary trafficking pathway. Expressed with Orco in 40 olfactory receptor neurons in a broad area across the antenna, including both anterior and posterior faces. This expression pattern matches the distribution of the small sensilla basiconica. Expression in the antenna is observed late in antennal development at 93 hours APF.

The protein localises to the cell membrane. Its function is as follows. Odorant receptor which mediates acceptance or avoidance behavior, depending on its substrates. The odorant receptor repertoire encodes a large collection of odor stimuli that vary widely in identity, intensity, and duration. Complexes with Orco to form odorant-sensing units, providing sensitive and prolonged odorant signaling and calcium permeability. They are necessary and sufficient to promote functional reconstitution of odor-evoked signaling in sensory neurons that normally respond only to carbon dioxide. Involved in the behavioral responses to esters. Involved in the behavioral responses to pentyl acetate. In Drosophila melanogaster (Fruit fly), this protein is Odorant receptor 47a (Or47a).